The following is a 186-amino-acid chain: ATP synthase subunit delta (186 aa).

Belongs to the ATPase delta chain family. As to quaternary structure, F-type ATPases have 2 components, F(1) - the catalytic core - and F(0) - the membrane proton channel. F(1) has five subunits: alpha(3), beta(3), gamma(1), delta(1), epsilon(1). F(0) has three main subunits: a(1), b(2) and c(10-14). The alpha and beta chains form an alternating ring which encloses part of the gamma chain. F(1) is attached to F(0) by a central stalk formed by the gamma and epsilon chains, while a peripheral stalk is formed by the delta and b chains.

Its subcellular location is the cell inner membrane. Its function is as follows. F(1)F(0) ATP synthase produces ATP from ADP in the presence of a proton or sodium gradient. F-type ATPases consist of two structural domains, F(1) containing the extramembraneous catalytic core and F(0) containing the membrane proton channel, linked together by a central stalk and a peripheral stalk. During catalysis, ATP synthesis in the catalytic domain of F(1) is coupled via a rotary mechanism of the central stalk subunits to proton translocation. Functionally, this protein is part of the stalk that links CF(0) to CF(1). It either transmits conformational changes from CF(0) to CF(1) or is implicated in proton conduction. This chain is ATP synthase subunit delta, found in Leptospira interrogans serogroup Icterohaemorrhagiae serovar copenhageni (strain Fiocruz L1-130).